The chain runs to 81 residues: ATP synthase subunit c (81 aa).

The next 2 helical transmembrane spans lie at 5–25 (IAAG…IGAG) and 57–77 (VGLV…FVFA).

It belongs to the ATPase C chain family. F-type ATPases have 2 components, F(1) - the catalytic core - and F(0) - the membrane proton channel. F(1) has five subunits: alpha(3), beta(3), gamma(1), delta(1), epsilon(1). F(0) has three main subunits: a(1), b(2) and c(10-14). The alpha and beta chains form an alternating ring which encloses part of the gamma chain. F(1) is attached to F(0) by a central stalk formed by the gamma and epsilon chains, while a peripheral stalk is formed by the delta and b chains.

The protein localises to the cell membrane. In terms of biological role, f(1)F(0) ATP synthase produces ATP from ADP in the presence of a proton or sodium gradient. F-type ATPases consist of two structural domains, F(1) containing the extramembraneous catalytic core and F(0) containing the membrane proton channel, linked together by a central stalk and a peripheral stalk. During catalysis, ATP synthesis in the catalytic domain of F(1) is coupled via a rotary mechanism of the central stalk subunits to proton translocation. Functionally, key component of the F(0) channel; it plays a direct role in translocation across the membrane. A homomeric c-ring of between 10-14 subunits forms the central stalk rotor element with the F(1) delta and epsilon subunits. The protein is ATP synthase subunit c of Mycobacterium sp. (strain JLS).